The sequence spans 88 residues: Phosphocarrier protein HPr (88 aa).

The HPr domain maps to 1–88 (MEQKSYVIID…DILSKEGLTK (88 aa)). Histidine 15 serves as the catalytic Pros-phosphohistidine intermediate. Residue serine 46 is modified to Phosphoserine; by HPrK/P.

Belongs to the HPr family.

The protein localises to the cytoplasm. With respect to regulation, phosphorylation on Ser-46 inhibits the phosphoryl transfer from enzyme I to HPr. Its function is as follows. General (non sugar-specific) component of the phosphoenolpyruvate-dependent sugar phosphotransferase system (sugar PTS). This major carbohydrate active-transport system catalyzes the phosphorylation of incoming sugar substrates concomitantly with their translocation across the cell membrane. The phosphoryl group from phosphoenolpyruvate (PEP) is transferred to the phosphoryl carrier protein HPr by enzyme I. Phospho-HPr then transfers it to the PTS EIIA domain. This is Phosphocarrier protein HPr (ptsH) from Staphylococcus xylosus.